A 134-amino-acid chain; its full sequence is Small ribosomal subunit protein uS9 (134 aa).

Positions 113–134 (REVERKKYGLKKARRAPQFSKR) are disordered. The span at 120–134 (YGLKKARRAPQFSKR) shows a compositional bias: basic residues.

It belongs to the universal ribosomal protein uS9 family.

The protein is Small ribosomal subunit protein uS9 of Thermotoga petrophila (strain ATCC BAA-488 / DSM 13995 / JCM 10881 / RKU-1).